The following is a 111-amino-acid chain: Probable 4-amino-4-deoxy-L-arabinose-phosphoundecaprenol flippase subunit ArnE (111 aa).

Topologically, residues 1-35 are cytoplasmic; that stretch reads MIWLTLVFASLLSVAGQLCQKQATCFVAINKRRKH. Residues 36–56 form a helical membrane-spanning segment; that stretch reads IVLWLGLALACLGLAMVLWLL. One can recognise an EamA domain in the interval 40-109; that stretch reads LGLALACLGL…IIGGIVILGS (70 aa). The Periplasmic segment spans residues 57–60; the sequence is VLQN. A helical membrane pass occupies residues 61–81; it reads VPVGIAYPMLSLNFVWVTLAA. The Cytoplasmic segment spans residues 82 to 87; the sequence is VKLWHE. A helical membrane pass occupies residues 88–108; the sequence is PVSPRHWCGVAFIIGGIVILG. Over 109–111 the chain is Periplasmic; that stretch reads STV.

This sequence belongs to the ArnE family. As to quaternary structure, heterodimer of ArnE and ArnF.

The protein resides in the cell inner membrane. It participates in bacterial outer membrane biogenesis; lipopolysaccharide biosynthesis. In terms of biological role, translocates 4-amino-4-deoxy-L-arabinose-phosphoundecaprenol (alpha-L-Ara4N-phosphoundecaprenol) from the cytoplasmic to the periplasmic side of the inner membrane. This Escherichia coli (strain ATCC 8739 / DSM 1576 / NBRC 3972 / NCIMB 8545 / WDCM 00012 / Crooks) protein is Probable 4-amino-4-deoxy-L-arabinose-phosphoundecaprenol flippase subunit ArnE.